A 523-amino-acid polypeptide reads, in one-letter code: MGKTMWARAVFLCFSVGTLLWQEVLTRRIPVDTGQCGLPKSQEDLNSFLWTVRRHPPAYLFGTIHVPYTRVWDFIPQNSKKAFHDSNSVYFELDLTDPYTISALANCQMLPQGENLQDVLPRDLYRRLKRHLEYVKHMMPHWMTPDQRGKGLYADYLFNAIAGNWERKRPVWVMLMVNSLTEADIRSRGVPVLDLYLAQEADRMKKKTGAVERVEEQCHPLNRLNLSQVLFALNQTLLQHESLRAGSFQAPYTTEDLIKHYNCGDLNAVIFSHDSSQLPNFINVTLPPHEQVTAQEIDIYFRQELIYKRNERMARRVIALLKENKDKSFFFAFGAGHFLGNNTVIDVLRQNGYEVEHTPAGQTFTAAKPKTNPTSDDSMATDSPAMKYFDHVPATASYFGESDEEMLPPHLLLPDSISQLEEFGKQNSWHRKHYRNQRPRQFNDLWVRLDDSTTTLPSNTRNTNGEQSAESLVWLPEQDHHNYLDVKLSHSQSNSSPKCLSASPAFLYTLVTLCLITTMRTRS.

The N-terminal stretch at Met1–Thr26 is a signal peptide. At Arg27 to Cys499 the chain is on the extracellular side. Residues Asn225, Asn234, Asn283, and Asn341 are each glycosylated (N-linked (GlcNAc...) asparagine). A helical transmembrane segment spans residues Leu500–Ile516. At Thr517–Ser523 the chain is on the cytoplasmic side.

It belongs to the TIKI family. Mn(2+) serves as cofactor. The cofactor is Co(2+).

The protein resides in the cell membrane. Its function is as follows. Metalloprotease that acts as a negative regulator of the Wnt signaling pathway by mediating the cleavage of the N-terminal residues of a subset of Wnt proteins. Following cleavage, Wnt proteins become oxidized and form large disulfide-bond oligomers, leading to their inactivation. Able to cleave wnt8. Required for head formation. The sequence is that of Metalloprotease TIKI2 (trabd2b) from Xenopus tropicalis (Western clawed frog).